A 156-amino-acid chain; its full sequence is ATP synthase subunit b (156 aa).

The chain crosses the membrane as a helical span at residues 11–31 (AIAFVLFVLFCMKYVWPPIMA).

This sequence belongs to the ATPase B chain family. As to quaternary structure, F-type ATPases have 2 components, F(1) - the catalytic core - and F(0) - the membrane proton channel. F(1) has five subunits: alpha(3), beta(3), gamma(1), delta(1), epsilon(1). F(0) has three main subunits: a(1), b(2) and c(10-14). The alpha and beta chains form an alternating ring which encloses part of the gamma chain. F(1) is attached to F(0) by a central stalk formed by the gamma and epsilon chains, while a peripheral stalk is formed by the delta and b chains.

It localises to the cell inner membrane. Functionally, f(1)F(0) ATP synthase produces ATP from ADP in the presence of a proton or sodium gradient. F-type ATPases consist of two structural domains, F(1) containing the extramembraneous catalytic core and F(0) containing the membrane proton channel, linked together by a central stalk and a peripheral stalk. During catalysis, ATP synthesis in the catalytic domain of F(1) is coupled via a rotary mechanism of the central stalk subunits to proton translocation. Component of the F(0) channel, it forms part of the peripheral stalk, linking F(1) to F(0). This is ATP synthase subunit b from Proteus mirabilis (strain HI4320).